We begin with the raw amino-acid sequence, 333 residues long: Ketol-acid reductoisomerase (NADP(+)) (333 aa).

The region spanning 2–182 is the KARI N-terminal Rossmann domain; that stretch reads AELFYDADAD…GGTRAGVIKT (181 aa). Residues 25 to 28, S51, S53, and 83 to 86 contribute to the NADP(+) site; these read YGSQ and DPIQ. H108 is a catalytic residue. NADP(+) is bound at residue G134. Residues 183–328 enclose the KARI C-terminal knotted domain; it reads TFTEETETDL…KELRKLMSWV (146 aa). D191, E195, E227, and E231 together coordinate Mg(2+). S252 provides a ligand contact to substrate.

Belongs to the ketol-acid reductoisomerase family. Requires Mg(2+) as cofactor.

It catalyses the reaction (2R)-2,3-dihydroxy-3-methylbutanoate + NADP(+) = (2S)-2-acetolactate + NADPH + H(+). The catalysed reaction is (2R,3R)-2,3-dihydroxy-3-methylpentanoate + NADP(+) = (S)-2-ethyl-2-hydroxy-3-oxobutanoate + NADPH + H(+). It functions in the pathway amino-acid biosynthesis; L-isoleucine biosynthesis; L-isoleucine from 2-oxobutanoate: step 2/4. Its pathway is amino-acid biosynthesis; L-valine biosynthesis; L-valine from pyruvate: step 2/4. Its function is as follows. Involved in the biosynthesis of branched-chain amino acids (BCAA). Catalyzes an alkyl-migration followed by a ketol-acid reduction of (S)-2-acetolactate (S2AL) to yield (R)-2,3-dihydroxy-isovalerate. In the isomerase reaction, S2AL is rearranged via a Mg-dependent methyl migration to produce 3-hydroxy-3-methyl-2-ketobutyrate (HMKB). In the reductase reaction, this 2-ketoacid undergoes a metal-dependent reduction by NADPH to yield (R)-2,3-dihydroxy-isovalerate. The protein is Ketol-acid reductoisomerase (NADP(+)) of Streptomyces avermitilis (strain ATCC 31267 / DSM 46492 / JCM 5070 / NBRC 14893 / NCIMB 12804 / NRRL 8165 / MA-4680).